Here is a 156-residue protein sequence, read N- to C-terminus: MLKITIITLGNKMPDWVNSGVNEYAKRFHDGIQIKLIEIPLLRRNKSSDLARILEKESALIKDALPANARLIALDMLGKSFSSEELALKLTQLQQISSHLCFIIGGPEGLSNEILTLCDERWSLSKLTLPHPLVRIILLESLYRAWSIINNHPYHK.

Residues leucine 74, glycine 105, and 124–129 contribute to the S-adenosyl-L-methionine site; that span reads LSKLTL.

The protein belongs to the RNA methyltransferase RlmH family. In terms of assembly, homodimer.

It is found in the cytoplasm. The enzyme catalyses pseudouridine(1915) in 23S rRNA + S-adenosyl-L-methionine = N(3)-methylpseudouridine(1915) in 23S rRNA + S-adenosyl-L-homocysteine + H(+). Its function is as follows. Specifically methylates the pseudouridine at position 1915 (m3Psi1915) in 23S rRNA. The sequence is that of Ribosomal RNA large subunit methyltransferase H from Legionella pneumophila (strain Paris).